Reading from the N-terminus, the 834-residue chain is Glycerol-3-phosphate acyltransferase (834 aa).

The HXXXXD motif motif lies at 304–309; the sequence is CHRSHM. Residues 800-834 are disordered; that stretch reads SVSMPAETSNQPEAPETPETPETPETPEPEGKTES.

It belongs to the GPAT/DAPAT family.

Its subcellular location is the cell inner membrane. It catalyses the reaction sn-glycerol 3-phosphate + an acyl-CoA = a 1-acyl-sn-glycero-3-phosphate + CoA. The protein operates within phospholipid metabolism; CDP-diacylglycerol biosynthesis; CDP-diacylglycerol from sn-glycerol 3-phosphate: step 1/3. The protein is Glycerol-3-phosphate acyltransferase of Yersinia pseudotuberculosis serotype I (strain IP32953).